We begin with the raw amino-acid sequence, 184 residues long: Putative NAD(P)H nitroreductase HI_1542 (184 aa).

FMN is bound by residues 10–12, R35, and H39; that span reads RKS. 122-127 contributes to the NAD(+) binding site; that stretch reads AAQAQG. Residue 132–134 coordinates FMN; the sequence is WIS.

It belongs to the nitroreductase family. Homodimer. It depends on FMN as a cofactor.

This Haemophilus influenzae (strain ATCC 51907 / DSM 11121 / KW20 / Rd) protein is Putative NAD(P)H nitroreductase HI_1542.